The primary structure comprises 742 residues: Dynein axonemal intermediate chain 4 (742 aa).

WD repeat units follow at residues 462-502, 511-559, 631-671, and 674-713; these read HCEC…DFPV, KHTS…DCND, GHKG…PILT, and NTTN…IDPV.

Part of the multisubunit axonemal dynein complex formed at least of two heavy chains and a number of intermediate and light chains. Associated with axonemal dynein subunits such as, DNAH2, DNAI3, and DYNLT1.

Its subcellular location is the cytoplasm. The protein localises to the cytoskeleton. The protein resides in the flagellum axoneme. It is found in the cilium axoneme. It localises to the dynein axonemal particle. In terms of biological role, plays a critical role in the assembly of axonemal dynein complex, thereby playing a role in ciliary motility. The chain is Dynein axonemal intermediate chain 4 from Xenopus laevis (African clawed frog).